We begin with the raw amino-acid sequence, 177 residues long: ATP synthase subunit delta (177 aa).

Belongs to the ATPase delta chain family. F-type ATPases have 2 components, F(1) - the catalytic core - and F(0) - the membrane proton channel. F(1) has five subunits: alpha(3), beta(3), gamma(1), delta(1), epsilon(1). F(0) has three main subunits: a(1), b(2) and c(10-14). The alpha and beta chains form an alternating ring which encloses part of the gamma chain. F(1) is attached to F(0) by a central stalk formed by the gamma and epsilon chains, while a peripheral stalk is formed by the delta and b chains.

The protein localises to the cell inner membrane. Functionally, f(1)F(0) ATP synthase produces ATP from ADP in the presence of a proton or sodium gradient. F-type ATPases consist of two structural domains, F(1) containing the extramembraneous catalytic core and F(0) containing the membrane proton channel, linked together by a central stalk and a peripheral stalk. During catalysis, ATP synthesis in the catalytic domain of F(1) is coupled via a rotary mechanism of the central stalk subunits to proton translocation. Its function is as follows. This protein is part of the stalk that links CF(0) to CF(1). It either transmits conformational changes from CF(0) to CF(1) or is implicated in proton conduction. The polypeptide is ATP synthase subunit delta (Vibrio alginolyticus).